Here is a 142-residue protein sequence, read N- to C-terminus: Large ribosomal subunit protein uL13 (142 aa).

Belongs to the universal ribosomal protein uL13 family. In terms of assembly, part of the 50S ribosomal subunit.

This protein is one of the early assembly proteins of the 50S ribosomal subunit, although it is not seen to bind rRNA by itself. It is important during the early stages of 50S assembly. The chain is Large ribosomal subunit protein uL13 from Psychromonas ingrahamii (strain DSM 17664 / CCUG 51855 / 37).